A 362-amino-acid polypeptide reads, in one-letter code: Sulfate/thiosulfate import ATP-binding protein CysA (362 aa).

Residues 3-237 (IEIHDLSKQF…PANPFVYEFL (235 aa)) form the ABC transporter domain. 35 to 42 (GPSGSGKT) lines the ATP pocket.

The protein belongs to the ABC transporter superfamily. Sulfate/tungstate importer (TC 3.A.1.6) family. The complex is composed of two ATP-binding proteins (CysA), two transmembrane proteins (CysT and CysW) and a solute-binding protein (CysP).

Its subcellular location is the cell inner membrane. It carries out the reaction sulfate(out) + ATP + H2O = sulfate(in) + ADP + phosphate + H(+). It catalyses the reaction thiosulfate(out) + ATP + H2O = thiosulfate(in) + ADP + phosphate + H(+). Functionally, part of the ABC transporter complex CysAWTP involved in sulfate/thiosulfate import. Responsible for energy coupling to the transport system. This is Sulfate/thiosulfate import ATP-binding protein CysA from Nitrosomonas europaea (strain ATCC 19718 / CIP 103999 / KCTC 2705 / NBRC 14298).